We begin with the raw amino-acid sequence, 328 residues long: Arabinose 5-phosphate isomerase KdsD (328 aa).

Residues 41 to 184 (ACEKMFNCTG…AVALLKARGF (144 aa)) enclose the SIS domain. Substrate is bound by residues 75 to 76 (GT), H82, H88, 114 to 123 (ALIPVLKRLH), and 148 to 150 (KVP). Residue H82 coordinates Zn(2+). In terms of domain architecture, CBS 1 spans 210–268 (MHTGDEIPHVNKHATLRDALLEITRKNLGMTVICDESMKIDGIFTDGDLRRMFDMGGDM). E275 is a substrate binding site. One can recognise a CBS 2 domain in the interval 277–328 (MTPGGIRVRPGILAVDALNLMQSRHITSVLVADGDQLLGVLHMHDLLRAGVV).

Belongs to the SIS family. GutQ/KpsF subfamily. In terms of assembly, homotetramer.

The catalysed reaction is D-arabinose 5-phosphate = D-ribulose 5-phosphate. It participates in carbohydrate biosynthesis; 3-deoxy-D-manno-octulosonate biosynthesis; 3-deoxy-D-manno-octulosonate from D-ribulose 5-phosphate: step 1/3. It functions in the pathway bacterial outer membrane biogenesis; lipopolysaccharide biosynthesis. Functionally, involved in the biosynthesis of 3-deoxy-D-manno-octulosonate (KDO), a unique 8-carbon sugar component of lipopolysaccharides (LPSs). Catalyzes the reversible aldol-ketol isomerization between D-ribulose 5-phosphate (Ru5P) and D-arabinose 5-phosphate (A5P). This Salmonella typhi protein is Arabinose 5-phosphate isomerase KdsD (kdsD).